Reading from the N-terminus, the 821-residue chain is Palmitoyltransferase AKR1 (821 aa).

Residues 1 to 118 are disordered; sequence MVDKDANNEL…KDTASRKSMD (118 aa). At 1-400 the chain is on the cytoplasmic side; the sequence is MVDKDANNEL…TIYLNPKIGK (400 aa). The segment covering 93–117 has biased composition (basic and acidic residues); that stretch reads IQDESVNDKTSEPDENKDTASRKSM. ANK repeat units lie at residues 142–172, 176–205, 213–243, 247–277, 289–318, and 322–351; these read PSLH…KAND, DGIT…SKAD, LKAS…DPTL, QSYN…STST, CDRT…DVSK, and NLFI…NIFA. A helical membrane pass occupies residues 401–421; it reads LVTFFTPYIILPIMFQVCSFY. N422 is a topological domain (lumenal). A helical membrane pass occupies residues 423-443; that stretch reads GFVIPKLFFSVVLFAGSIYIL. The Cytoplasmic portion of the chain corresponds to 444-463; that stretch reads QKLVIPTYLAEEKAIPKSPL. Residues 464–484 traverse the membrane as a helical segment; that stretch reads LAGIFSGTAFWCIVTWAFNII. Residues 485–494 are Lumenal-facing; that stretch reads PTLLFKKFIS. A helical transmembrane segment spans residues 495–515; sequence NLVLSAFIYLFVWSFFKAMFI. The Cytoplasmic segment spans residues 516-589; that stretch reads NPGYVPVPSD…YNDIGVRNHK (74 aa). The 51-residue stretch at 546–596 folds into the DHHC domain; the sequence is NFCVNTFVRKPLRSKYSRFNKKLIARFDHYCPWVYNDIGVRNHKLFVVFVY. Residue C576 is the S-palmitoyl cysteine intermediate of the active site. A helical transmembrane segment spans residues 590 to 610; it reads LFVVFVYSLNLAVLLFTHLSI. The Lumenal segment spans residues 611–650; that stretch reads KLFKNTEKMSGYDSDDESQKCWLLSDELCVGYKSHHFQFN. Residues 651–671 traverse the membrane as a helical segment; the sequence is LMLWCLIQYIWIAFLCLVQTF. The Cytoplasmic segment spans residues 672-821; the sequence is QILKGLTTWE…YPPKLADVDA (150 aa).

It belongs to the DHHC palmitoyltransferase family. AKR/ZDHHC17 subfamily.

It localises to the early endosome membrane. Its subcellular location is the golgi apparatus membrane. The catalysed reaction is L-cysteinyl-[protein] + hexadecanoyl-CoA = S-hexadecanoyl-L-cysteinyl-[protein] + CoA. Its function is as follows. Palmitoyltransferase specific for casein kinase 1. The protein is Palmitoyltransferase AKR1 (AKR1) of Debaryomyces hansenii (strain ATCC 36239 / CBS 767 / BCRC 21394 / JCM 1990 / NBRC 0083 / IGC 2968) (Yeast).